A 305-amino-acid polypeptide reads, in one-letter code: UDP-3-O-acyl-N-acetylglucosamine deacetylase (305 aa).

His-79, His-238, and Asp-242 together coordinate Zn(2+). Catalysis depends on His-265, which acts as the Proton donor.

Belongs to the LpxC family. It depends on Zn(2+) as a cofactor.

The enzyme catalyses a UDP-3-O-[(3R)-3-hydroxyacyl]-N-acetyl-alpha-D-glucosamine + H2O = a UDP-3-O-[(3R)-3-hydroxyacyl]-alpha-D-glucosamine + acetate. Its pathway is glycolipid biosynthesis; lipid IV(A) biosynthesis; lipid IV(A) from (3R)-3-hydroxytetradecanoyl-[acyl-carrier-protein] and UDP-N-acetyl-alpha-D-glucosamine: step 2/6. Functionally, catalyzes the hydrolysis of UDP-3-O-myristoyl-N-acetylglucosamine to form UDP-3-O-myristoylglucosamine and acetate, the committed step in lipid A biosynthesis. This chain is UDP-3-O-acyl-N-acetylglucosamine deacetylase, found in Histophilus somni (strain 129Pt) (Haemophilus somnus).